The sequence spans 21 residues: Thanatin (21 aa).

The cysteines at positions 11 and 18 are disulfide-linked.

The protein resides in the secreted. Functionally, insect defense peptide with a broad spectrum of activity against Gram-positive and Gram-negative bacteria and fungi. No activity against S.aureus. Stops respiration in bacteria but does not permeabilize their inner membranes. The protein is Thanatin of Podisus maculiventris (Spined soldier bug).